A 399-amino-acid polypeptide reads, in one-letter code: Chorismate synthase (399 aa).

A disordered region spans residues 41–72; it reads IQKDLDRRKPGQSMITTSRGEPDKVTINSGIQ. An NADP(+)-binding site is contributed by arginine 48. FMN contacts are provided by residues 125–127, glycine 288, 303–307, and arginine 330; these read RSS and HAPVS. Composition is skewed to basic and acidic residues over residues 363 to 377 and 389 to 399; these read PDRL…DTDY and ADTHAKTIDDD. The interval 363–399 is disordered; the sequence is PDRLDGRPGEYDTDYHPSSPQNDPEDADTHAKTIDDD.

The protein belongs to the chorismate synthase family. FMNH2 serves as cofactor.

It carries out the reaction 5-O-(1-carboxyvinyl)-3-phosphoshikimate = chorismate + phosphate. It functions in the pathway metabolic intermediate biosynthesis; chorismate biosynthesis; chorismate from D-erythrose 4-phosphate and phosphoenolpyruvate: step 7/7. In terms of biological role, catalyzes the anti-1,4-elimination of the C-3 phosphate and the C-6 proR hydrogen from 5-enolpyruvylshikimate-3-phosphate (EPSP) to yield chorismate, which is the branch point compound that serves as the starting substrate for the three terminal pathways of aromatic amino acid biosynthesis. This reaction introduces a second double bond into the aromatic ring system. This is Chorismate synthase from Haloarcula marismortui (strain ATCC 43049 / DSM 3752 / JCM 8966 / VKM B-1809) (Halobacterium marismortui).